The following is a 336-amino-acid chain: Alpha-N-acetylgalactosaminide alpha-2,6-sialyltransferase 5 (336 aa).

The Cytoplasmic segment spans residues 1-8 (MKTLMRHG). Residues 9–29 (LAVCLVLTTMCTSLLLVYSSL) traverse the membrane as a helical; Signal-anchor for type II membrane protein segment. Topologically, residues 30–336 (GSQKERPPQQ…VNHAEGKPVF (307 aa)) are lumenal. The interval 34-76 (ERPPQQQQQQQQQQQQAATATGSTQLVESSPQPRRTAPAGPRQ) is disordered. The span at 38 to 49 (QQQQQQQQQQQQ) shows a compositional bias: low complexity. Residues 50-66 (AATATGSTQLVESSPQP) are compositionally biased toward polar residues. A disulfide bond links cysteine 96 and cysteine 245. Residues asparagine 137 and asparagine 161 are each glycosylated (N-linked (GlcNAc...) asparagine).

Belongs to the glycosyltransferase 29 family. High expression in forebrain and to a lesser extent in cerebellum. No expression in salivary gland, intestine, liver, kidney, heart, lung, thymus and spleen.

The protein resides in the golgi apparatus membrane. The catalysed reaction is a ganglioside GM1b (d18:1(4E)) + CMP-N-acetyl-beta-neuraminate = a ganglioside GD1alpha (d18:1(4E)) + CMP + H(+). It carries out the reaction N-acetyl-alpha-neuraminosyl-(2-&gt;3)-beta-D-galactosyl-(1-&gt;3)-N-acetyl-beta-D-glucosaminyl-(1-&gt;3)-beta-D-galactosyl-(1-&gt;4)-beta-D-glucosyl-(1&lt;-&gt;1')-N-acyl-sphing-4-enine + CMP-N-acetyl-beta-neuraminate = N-acetyl-alpha-neuraminosyl-(2-&gt;3)-beta-D-galactosyl-(1-&gt;3)-[N-acetyl-alpha-neuraminosyl-(2-&gt;6)]-N-acetyl-beta-D-glucosaminyl-(1-&gt;3)-beta-D-galactosyl-(1-&gt;4)-beta-D-glucosyl-(1&lt;-&gt;1')-N-acyl-sphing-4-enine + CMP + H(+). The protein operates within glycolipid biosynthesis. In terms of biological role, predominantly catalyzes the biosynthesis of ganglioside GD1alpha from GM1b in the brain, by transferring the sialyl group (N-acetyl-alpha-neuraminyl or NeuAc) from CMP-NeuAc to the GalNAc residue on the NeuAc-alpha-2,3-Gal-beta-1,3-GalNAc sequence of GM1b. GD1alpha is a critical molecule in the communication and interaction between neuronal cells and their supportive cells, particularly in brain tissues, and functions as an adhesion molecule in the process of metastasis. Also shows activity towards sialyl Lc4Cer (N-acetyl-alpha-neuraminosyl-(2-&gt;3)-beta-D-galactosyl-(1-&gt;3)-N-acetyl-beta-D-glucosaminyl-(1-&gt;3)-beta-D-galactosyl-(1-&gt;4)-beta-D-glucosyl-(1&lt;-&gt;1')-N-acyl-sphing-4-enine) generating disialyl Lc4Cer, which can lead to the synthesis of disialyl Lewis a (Le(a)), suggested to be a cancer-associated antigen. In Mus musculus (Mouse), this protein is Alpha-N-acetylgalactosaminide alpha-2,6-sialyltransferase 5 (St6galnac5).